Consider the following 363-residue polypeptide: Fructose-bisphosphate aldolase C-B (363 aa).

The substrate site is built by arginine 56 and lysine 147. The active-site Proton acceptor is glutamate 188. Lysine 230 acts as the Schiff-base intermediate with dihydroxyacetone-P in catalysis.

This sequence belongs to the class I fructose-bisphosphate aldolase family. Homotetramer.

The enzyme catalyses beta-D-fructose 1,6-bisphosphate = D-glyceraldehyde 3-phosphate + dihydroxyacetone phosphate. The protein operates within carbohydrate degradation; glycolysis; D-glyceraldehyde 3-phosphate and glycerone phosphate from D-glucose: step 4/4. This chain is Fructose-bisphosphate aldolase C-B (aldocb), found in Danio rerio (Zebrafish).